Here is a 129-residue protein sequence, read N- to C-terminus: Procyclic form-specific polypeptide A-beta (129 aa).

Residues 1-27 (MAPRSLYLLAVLLFSANLFAGVGFAAA) form the signal peptide. Positions 27–111 (AAEGPEDKGL…PEPEPGAATL (85 aa)) are disordered. Acidic residues predominate over residues 53–104 (DDTNGTDPDPEPEPEPEPEPEPEPEPEPEPEPEPEPEPEPEPEPEPEPEPEP). Asparagine 56 carries N-linked (GlcNAc...) asparagine glycosylation. Tandem repeats lie at residues 59 to 60 (DP), 61 to 62 (DP), 63 to 64 (EP), 65 to 66 (EP), 67 to 68 (EP), 69 to 70 (EP), 71 to 72 (EP), 73 to 74 (EP), 75 to 76 (EP), 77 to 78 (EP), 79 to 80 (EP), 81 to 82 (EP), 83 to 84 (EP), 85 to 86 (EP), 87 to 88 (EP), 89 to 90 (EP), 91 to 92 (EP), 93 to 94 (EP), 95 to 96 (EP), 97 to 98 (EP), 99 to 100 (EP), 101 to 102 (EP), 103 to 104 (EP), and 105 to 106 (EP). Residues 59 to 106 (DPDPEPEPEPEPEPEPEPEPEPEPEPEPEPEPEPEPEPEPEPEPEPEP) form a 24 X 2 AA tandem repeats of [DE]-P region. Glycine 107 is lipidated: GPI-anchor amidated glycine. A propeptide spanning residues 108–129 (AATLKSVALPFAIAAVGLVAAF) is cleaved from the precursor.

The protein resides in the cell membrane. Functionally, major surface antigen of procyclic forms. In Trypanosoma brucei brucei, this protein is Procyclic form-specific polypeptide A-beta (PARPA-BETA).